Here is a 1708-residue protein sequence, read N- to C-terminus: Rapamycin-insensitive companion of mTOR (1708 aa).

The interval 1-789 is interaction with NBN; sequence MAAIGRGRSL…DKANLHALIQ (789 aa). Residues Ser-21, Ser-35, and Ser-265 each carry the phosphoserine modification. Residue Lys-274 forms a Glycyl lysine isopeptide (Lys-Gly) (interchain with G-Cter in ubiquitin) linkage. Residues 521-570 are ribosome-binding domain; it reads LKDTEEALLINLRDSQVLQHKENLEWNWNLIGTILKWPNVNLRNYKDEQL. ATP contacts are provided by Asn-543, Arg-572, and Arg-576. The disordered stretch occupies residues 1022-1041; sequence LSLNSESTSSRHNSESESVP. 2 positions are modified to N6-acetyllysine: Lys-1092 and Lys-1095. Thr-1103 bears the Phosphothreonine mark. The tract at residues 1103-1134 is disordered; it reads TLPNKKHRSSSDPKGGKLSSESKTSNRRIRTL. N6-acetyllysine is present on residues Lys-1116, Lys-1119, and Lys-1125. Residue Thr-1135 is modified to Phosphothreonine; by RPS6KB1. Phosphoserine occurs at positions 1138, 1162, and 1219. The interval 1204–1252 is disordered; the sequence is VVESSTSSHMKIRSQSFNTDTTTSGISSMSSSPSRETVGVDATTMDTDC. The span at 1206-1221 shows a compositional bias: polar residues; sequence ESSTSSHMKIRSQSFN. The span at 1222 to 1240 shows a compositional bias: low complexity; sequence TDTTTSGISSMSSSPSRET. Ser-1235 is modified (phosphoserine; by GSK3-beta). Thr-1271 bears the Phosphothreonine mark. Ser-1274, Ser-1278, Ser-1282, and Ser-1284 each carry phosphoserine. A compositionally biased stretch (low complexity) spans 1275–1288; the sequence is NHLSLSKSNSVSLV. The disordered stretch occupies residues 1275-1298; it reads NHLSLSKSNSVSLVPPGSSHTLPR. A Phosphothreonine modification is found at Thr-1295. A phosphoserine mark is found at Ser-1302 and Ser-1313. Thr-1332 is subject to Phosphothreonine. Phosphoserine occurs at positions 1346 and 1353. Position 1376 is a phosphothreonine (Thr-1376). Ser-1385 carries the post-translational modification Phosphoserine. Position 1386 is a phosphotyrosine (Tyr-1386). Phosphoserine occurs at positions 1388, 1396, and 1411. The Zn(2+) site is built by His-1515, Cys-1520, and Cys-1523. Phosphoserine occurs at positions 1571, 1574, 1577, and 1591. Cys-1651 contributes to the Zn(2+) binding site. Thr-1695 bears the Phosphothreonine; by GSK3-alpha and GSK3-beta mark.

The protein belongs to the RICTOR family. Component of the mechanistic target of rapamycin complex 2 (mTORC2), consisting in two heterotretramers composed of MTOR, MLST8, RICTOR and MAPKAP1/SIN1. The mTORC2 core complex associates with PRR5/PROTOR1 and/or PRR5L/PROTOR2. Contrary to mTORC1, mTORC2 does not bind to and is not sensitive to FKBP12-rapamycin. Binds directly to MTOR and PRR5 within the TORC2 complex; interaction with MTOR is enhanced by deubiquitination of RICTOR by USP9X. Interaction with MAPKAP1 is not enhanced by RICTOR deubiquitination by USP9X. Interacts with CCDC28B. Interacts with NBN. Interacts with SIK3. Interacts with NCKAP1L. Interacts with kinases GSK3A and GSK3B; the interactions lead to phosphorylation of RICTOR at Thr-1695 which facilitates its FBXW7-mediated ubiquitination and subsequent degradation. Interacts with FBXW7; the interaction is enhanced by GSK3-mediated phosphorylation of Thr-1695 and results in RICTOR ubiquitination and degradation. Interacts with ARMH4 (via cytoplasmic tail); this interaction bridges ARMH4 to the mTORC2 complex and inhibits the mTORC2 kinase activity. Interacts with UBXN2A. Interacts with TSPAN8. In terms of assembly, (Microbial infection) Interacts with vaccinia virus protein F17; this interaction dysregulates MTOR. Post-translationally, phosphorylated by MTOR; when part of mTORC2. Phosphorylated at Thr-1135 by RPS6KB1 downstream of the mTORC1 complex: phosphorylation of RICTOR inhibits mTORC2 signaling by creating a binding site for 14-3-3 proteins. Phosphorylated at Thr-1695 by GSK3A and GSK3B which facilitates RICTOR ubiquitination and subsequent degradation. Phosphorylated at Ser-1235 by GSK3B in response to endoplasmic stress, inhibiting mTORC2 signaling. Ubiquitinated by the SCF(FBXW7) complex, leading to its degradation by the proteasome. Deubiquitinated by USP9X; deubiquitination stabilizes RICTOR and enhances its binding to MTOR, thus promoting mTORC2 complex assembly. In terms of processing, acetylated by EP300/p300 in response to glucose, leading to activate the mTORC2 complex. Acetylation by BLOC1S1/GCN5L1 in response to hypotoxic stress protects RICTOR against ubiquitination and subsequent degradation by the proteasome.

The protein resides in the cell membrane. Its subcellular location is the endoplasmic reticulum membrane. The protein localises to the lysosome membrane. Functionally, component of the mechanistic target of rapamycin complex 2 (mTORC2), which transduces signals from growth factors to pathways involved in proliferation, cytoskeletal organization, lipogenesis and anabolic output. In response to growth factors, mTORC2 phosphorylates and activates AGC protein kinase family members, including AKT (AKT1, AKT2 and AKT3), PKC (PRKCA, PRKCB and PRKCE) and SGK1. In contrast to mTORC1, mTORC2 is nutrient-insensitive. Within the mTORC2 complex, RICTOR probably acts as a molecular adapter. RICTOR is responsible for the FKBP12-rapamycin-insensitivity of mTORC2. mTORC2 plays a critical role in AKT1 activation by mediating phosphorylation of different sites depending on the context, such as 'Thr-450', 'Ser-473', 'Ser-477' or 'Thr-479', facilitating the phosphorylation of the activation loop of AKT1 on 'Thr-308' by PDPK1/PDK1 which is a prerequisite for full activation. mTORC2 catalyzes the phosphorylation of SGK1 at 'Ser-422' and of PRKCA on 'Ser-657'. The mTORC2 complex also phosphorylates various proteins involved in insulin signaling, such as FBXW8 and IGF2BP1. mTORC2 acts upstream of Rho GTPases to regulate the actin cytoskeleton, probably by activating one or more Rho-type guanine nucleotide exchange factors. mTORC2 promotes the serum-induced formation of stress-fibers or F-actin. The sequence is that of Rapamycin-insensitive companion of mTOR from Homo sapiens (Human).